We begin with the raw amino-acid sequence, 118 residues long: uncharacterized protein (118 aa).

The tract at residues 98-118 (KGKGNEGREEAEEPLEEPEEG) is disordered. The span at 106–118 (EEAEEPLEEPEEG) shows a compositional bias: acidic residues.

It belongs to the UPF0440 family.

This is an uncharacterized protein from Pyrococcus abyssi (strain GE5 / Orsay).